The sequence spans 316 residues: MSWKTEEVESHIPVMLKEFLKHCSPKRDEQWIDGTFGYGGHTTALLDKGCKVLALDTDEDAQKRAEILKEKGEEFYFFRKNFSEMAEACFQMGWTAVDGILLDLGVSLGQLKDPKRGFSFQFPDAPLDMRMDRTRERTGAALLNTLSKEQLVQLFSVACNMKESQKLANEIVRFRSTGPIKKVGDFLEIVTRARLLKSKINAATRPFLALRIAVNEELEHLEKALREGTKLLKGGGRIAVISFHSAEDRIVKEFMRSHCLPKKGEGVAEEENHREMFFYKVERVLVSLEERKNNPRSRSARLRIAWKIPLEEKSGL.

S-adenosyl-L-methionine contacts are provided by residues 39-41, aspartate 56, phenylalanine 82, aspartate 103, and glutamine 110; that span reads GGH.

Belongs to the methyltransferase superfamily. RsmH family.

It localises to the cytoplasm. The enzyme catalyses cytidine(1402) in 16S rRNA + S-adenosyl-L-methionine = N(4)-methylcytidine(1402) in 16S rRNA + S-adenosyl-L-homocysteine + H(+). Its function is as follows. Specifically methylates the N4 position of cytidine in position 1402 (C1402) of 16S rRNA. This is Ribosomal RNA small subunit methyltransferase H from Methylacidiphilum infernorum (isolate V4) (Methylokorus infernorum (strain V4)).